The following is a 302-amino-acid chain: MTRTDQDSWDLASSVGATATMVAAARALASAEANPIIDDPFAAPLVRAVGLDFFTRLAEGEIDHDEQAQRDRQLVADSIAVRTRFFDDFFLDAARRGVRQSVILAAGLDARAYRLPWPSGSVVYEVDQPDVIDFKDTTMSALGAVPTATRRTVRVDLRDDWPAALRHNGFDTTQPTAWSAEGLLMYLPPDAQDRLFDAISGLSAPGSRLATEYHPDPGSTMAERAQQFNQRWVRLGCDIDLSGLFYEGERSNVVDYLTEHGWHVAARPRQDLFTDYGRVFPDADTSQLRSIVAVTATFGEAG.

S-adenosyl-L-methionine contacts are provided by residues Asp127 and Asp156–Leu157.

This sequence belongs to the UPF0677 family.

Functionally, exhibits S-adenosyl-L-methionine-dependent methyltransferase activity. This Mycobacterium marinum (strain ATCC BAA-535 / M) protein is Putative S-adenosyl-L-methionine-dependent methyltransferase MMAR_1068.